We begin with the raw amino-acid sequence, 758 residues long: Phosphoribosylformylglycinamidine synthase subunit PurL (758 aa).

Residue His57 is part of the active site. ATP-binding residues include Tyr60 and Arg104. A Mg(2+)-binding site is contributed by Glu106. Residues 107 to 110 (SHNH) and Arg129 contribute to the substrate site. Residue His108 is the Proton acceptor of the active site. Asp130 is a Mg(2+) binding site. Gln254 provides a ligand contact to substrate. Asp282 contributes to the Mg(2+) binding site. 326 to 328 (ESQ) serves as a coordination point for substrate. 2 residues coordinate ATP: Asn509 and Gly546. Asn547 is a binding site for Mg(2+). Ser549 is a binding site for substrate.

Belongs to the FGAMS family. Monomer. Part of the FGAM synthase complex composed of 1 PurL, 1 PurQ and 2 PurS subunits.

The protein resides in the cytoplasm. The catalysed reaction is N(2)-formyl-N(1)-(5-phospho-beta-D-ribosyl)glycinamide + L-glutamine + ATP + H2O = 2-formamido-N(1)-(5-O-phospho-beta-D-ribosyl)acetamidine + L-glutamate + ADP + phosphate + H(+). The protein operates within purine metabolism; IMP biosynthesis via de novo pathway; 5-amino-1-(5-phospho-D-ribosyl)imidazole from N(2)-formyl-N(1)-(5-phospho-D-ribosyl)glycinamide: step 1/2. Functionally, part of the phosphoribosylformylglycinamidine synthase complex involved in the purines biosynthetic pathway. Catalyzes the ATP-dependent conversion of formylglycinamide ribonucleotide (FGAR) and glutamine to yield formylglycinamidine ribonucleotide (FGAM) and glutamate. The FGAM synthase complex is composed of three subunits. PurQ produces an ammonia molecule by converting glutamine to glutamate. PurL transfers the ammonia molecule to FGAR to form FGAM in an ATP-dependent manner. PurS interacts with PurQ and PurL and is thought to assist in the transfer of the ammonia molecule from PurQ to PurL. The polypeptide is Phosphoribosylformylglycinamidine synthase subunit PurL (Corynebacterium ammoniagenes (Brevibacterium ammoniagenes)).